The primary structure comprises 68 residues: Riparin-1.5 amide (68 aa).

An N-terminal signal peptide occupies residues M1–A15. A propeptide spanning residues Q16–R41 is cleaved from the precursor. C47 and C53 are disulfide-bonded. The residue at position 53 (C53) is a Cysteine amide. Residues S57–E68 constitute a propeptide that is removed on maturation.

In terms of tissue distribution, expressed by the skin glands.

The protein resides in the secreted. The protein is Riparin-1.5 amide of Crinia riparia (Streambank froglet).